The primary structure comprises 253 residues: Ribosomal RNA small subunit methyltransferase G (253 aa).

S-adenosyl-L-methionine is bound by residues Gly-84, Phe-89, 135 to 136, and Arg-154; that span reads AE. Residues 228 to 253 form a disordered region; sequence TPAKYPRREGVPTHQPLFWKAKEQSR.

The protein belongs to the methyltransferase superfamily. RNA methyltransferase RsmG family.

It is found in the cytoplasm. Specifically methylates the N7 position of a guanine in 16S rRNA. The protein is Ribosomal RNA small subunit methyltransferase G of Deinococcus radiodurans (strain ATCC 13939 / DSM 20539 / JCM 16871 / CCUG 27074 / LMG 4051 / NBRC 15346 / NCIMB 9279 / VKM B-1422 / R1).